Here is an 86-residue protein sequence, read N- to C-terminus: RNA-binding protein Hfq (86 aa).

Residues 9–68 (DPFLNALRRERIPVSIYLVNGIKLQGQIESFDQFVILLKNTVNQMVYKHAISTVVPARPV) enclose the Sm domain. Residues 65 to 86 (ARPVSHHSGERGSDRPSEKSED) are disordered. Over residues 71-86 (HSGERGSDRPSEKSED) the composition is skewed to basic and acidic residues.

It belongs to the Hfq family. In terms of assembly, homohexamer.

RNA chaperone that binds small regulatory RNA (sRNAs) and mRNAs to facilitate mRNA translational regulation in response to envelope stress, environmental stress and changes in metabolite concentrations. Also binds with high specificity to tRNAs. In Vibrio vulnificus (strain YJ016), this protein is RNA-binding protein Hfq.